The primary structure comprises 289 residues: tRNA pseudouridine synthase A (289 aa).

Catalysis depends on D53, which acts as the Nucleophile. Residue Y119 participates in substrate binding.

The protein belongs to the tRNA pseudouridine synthase TruA family. In terms of assembly, homodimer.

The enzyme catalyses uridine(38/39/40) in tRNA = pseudouridine(38/39/40) in tRNA. Its function is as follows. Formation of pseudouridine at positions 38, 39 and 40 in the anticodon stem and loop of transfer RNAs. This is tRNA pseudouridine synthase A from Corynebacterium glutamicum (strain ATCC 13032 / DSM 20300 / JCM 1318 / BCRC 11384 / CCUG 27702 / LMG 3730 / NBRC 12168 / NCIMB 10025 / NRRL B-2784 / 534).